We begin with the raw amino-acid sequence, 284 residues long: 4-diphosphocytidyl-2-C-methyl-D-erythritol kinase (284 aa).

Residue Lys14 is part of the active site. An ATP-binding site is contributed by 98 to 108 (PMGGGLGGGSS). The active site involves Asp140.

The protein belongs to the GHMP kinase family. IspE subfamily.

It carries out the reaction 4-CDP-2-C-methyl-D-erythritol + ATP = 4-CDP-2-C-methyl-D-erythritol 2-phosphate + ADP + H(+). The protein operates within isoprenoid biosynthesis; isopentenyl diphosphate biosynthesis via DXP pathway; isopentenyl diphosphate from 1-deoxy-D-xylulose 5-phosphate: step 3/6. Its function is as follows. Catalyzes the phosphorylation of the position 2 hydroxy group of 4-diphosphocytidyl-2C-methyl-D-erythritol. This Shewanella halifaxensis (strain HAW-EB4) protein is 4-diphosphocytidyl-2-C-methyl-D-erythritol kinase.